We begin with the raw amino-acid sequence, 494 residues long: Beta-glucosidase 29 (494 aa).

A signal peptide spans 1–28 (MAWLGIGMGRQIVPVLVFVAVLCSGVDA). Residue Q49 participates in a beta-D-glucoside binding. N-linked (GlcNAc...) asparagine glycosylation is present at N103. A beta-D-glucoside contacts are provided by residues H138 and 183 to 184 (NE). E184 (proton donor) is an active-site residue. Residues C203 and C211 are joined by a disulfide bond. N-linked (GlcNAc...) asparagine glycosylation is present at N263. Y327 contacts a beta-D-glucoside. N352 carries N-linked (GlcNAc...) asparagine glycosylation. E398 contacts a beta-D-glucoside. E398 functions as the Nucleophile in the catalytic mechanism. N-linked (GlcNAc...) asparagine glycosylation occurs at N406. A beta-D-glucoside contacts are provided by residues W447, 454 to 455 (EW), and F463.

It belongs to the glycosyl hydrolase 1 family.

It carries out the reaction Hydrolysis of terminal, non-reducing beta-D-glucosyl residues with release of beta-D-glucose.. In Oryza sativa subsp. japonica (Rice), this protein is Beta-glucosidase 29 (BGLU29).